The following is a 469-amino-acid chain: 3-isopropylmalate dehydratase large subunit (469 aa).

Residues C349, C410, and C413 each contribute to the [4Fe-4S] cluster site.

This sequence belongs to the aconitase/IPM isomerase family. LeuC type 1 subfamily. In terms of assembly, heterodimer of LeuC and LeuD. The cofactor is [4Fe-4S] cluster.

The catalysed reaction is (2R,3S)-3-isopropylmalate = (2S)-2-isopropylmalate. The protein operates within amino-acid biosynthesis; L-leucine biosynthesis; L-leucine from 3-methyl-2-oxobutanoate: step 2/4. In terms of biological role, catalyzes the isomerization between 2-isopropylmalate and 3-isopropylmalate, via the formation of 2-isopropylmaleate. The sequence is that of 3-isopropylmalate dehydratase large subunit from Neisseria gonorrhoeae (strain NCCP11945).